A 439-amino-acid chain; its full sequence is Xylose isomerase (439 aa).

Active-site residues include His-99 and Asp-102. Mg(2+) is bound by residues Glu-230, Glu-266, His-269, Asp-294, Asp-305, Asp-307, and Asp-337.

The protein belongs to the xylose isomerase family. Homotetramer. The cofactor is Mg(2+).

Its subcellular location is the cytoplasm. It catalyses the reaction alpha-D-xylose = alpha-D-xylulofuranose. This chain is Xylose isomerase, found in Oceanobacillus iheyensis (strain DSM 14371 / CIP 107618 / JCM 11309 / KCTC 3954 / HTE831).